The chain runs to 327 residues: 4-hydroxy-2-oxoglutarate aldolase, mitochondrial (327 aa).

The N-terminal 25 residues, Met1–Trp25, are a transit peptide targeting the mitochondrion. Ser77 to Asn78 provides a ligand contact to substrate. Lys196 acts as the Schiff-base intermediate with substrate in catalysis. 2 residues coordinate substrate: Ser198 and Gly222.

This sequence belongs to the DapA family. Homotetramer.

Its subcellular location is the mitochondrion. The catalysed reaction is (4S)-4-hydroxy-2-oxoglutarate = glyoxylate + pyruvate. It catalyses the reaction (4R)-4-hydroxy-2-oxoglutarate = glyoxylate + pyruvate. With respect to regulation, inhibited by divalent cations. Its function is as follows. Catalyzes the final step in the metabolic pathway of hydroxyproline. The polypeptide is 4-hydroxy-2-oxoglutarate aldolase, mitochondrial (HOGA1) (Homo sapiens (Human)).